The sequence spans 259 residues: 14-3-3-like protein GF14 omega (259 aa).

Residues S67, S109, and S190 each carry the phosphoserine modification. T211 is subject to Phosphothreonine.

Belongs to the 14-3-3 family. In terms of assembly, interacts with CINV1.

It localises to the nucleus. It is found in the cytoplasm. Functionally, is associated with a DNA binding complex that binds to the G box, a well-characterized cis-acting DNA regulatory element found in plant genes. This Arabidopsis thaliana (Mouse-ear cress) protein is 14-3-3-like protein GF14 omega (GRF2).